A 161-amino-acid chain; its full sequence is MTSSSESTRKGLTKIATNRLQKEFMEWQTNPPSGFKHRVSDNLQRWIIEVHGVPGTLYANETYQLQVEFPEHYPMEAPQVIFQHPAPLHPHIYSNGHICLDVLYDSWSPAMRLSSICLSILSMLSSSSVKQKPKDNDHYLKNCKHGRSPKETRWRFHDDKV.

A UBC core domain is found at 15 to 161 (IATNRLQKEF…TRWRFHDDKV (147 aa)). The active-site Glycyl thioester intermediate is Cys-99.

It belongs to the ubiquitin-conjugating enzyme family.

The catalysed reaction is S-ubiquitinyl-[E1 ubiquitin-activating enzyme]-L-cysteine + [E2 ubiquitin-conjugating enzyme]-L-cysteine = [E1 ubiquitin-activating enzyme]-L-cysteine + S-ubiquitinyl-[E2 ubiquitin-conjugating enzyme]-L-cysteine.. The protein operates within protein modification; protein ubiquitination. Its function is as follows. Accepts the ubiquitin from the E1 complex and catalyzes its covalent attachment to other proteins. This chain is Probable ubiquitin-conjugating enzyme E2 17 (UBC17), found in Arabidopsis thaliana (Mouse-ear cress).